The following is a 448-amino-acid chain: Methylenetetrahydrofolate--tRNA-(uracil-5-)-methyltransferase TrmFO (448 aa).

13-18 (GAGLAG) contributes to the FAD binding site.

The protein belongs to the MnmG family. TrmFO subfamily. It depends on FAD as a cofactor.

It is found in the cytoplasm. It catalyses the reaction uridine(54) in tRNA + (6R)-5,10-methylene-5,6,7,8-tetrahydrofolate + NADH + H(+) = 5-methyluridine(54) in tRNA + (6S)-5,6,7,8-tetrahydrofolate + NAD(+). The catalysed reaction is uridine(54) in tRNA + (6R)-5,10-methylene-5,6,7,8-tetrahydrofolate + NADPH + H(+) = 5-methyluridine(54) in tRNA + (6S)-5,6,7,8-tetrahydrofolate + NADP(+). Functionally, catalyzes the folate-dependent formation of 5-methyl-uridine at position 54 (M-5-U54) in all tRNAs. The protein is Methylenetetrahydrofolate--tRNA-(uracil-5-)-methyltransferase TrmFO of Streptococcus pyogenes serotype M18 (strain MGAS8232).